A 331-amino-acid chain; its full sequence is Adenosine deaminase (331 aa).

The Zn(2+) site is built by His-12 and His-14. 3 residues coordinate substrate: His-14, Asp-16, and Gly-170. His-197 serves as a coordination point for Zn(2+). The Proton donor role is filled by Glu-200. Asp-278 is a binding site for Zn(2+). Asp-279 lines the substrate pocket.

Belongs to the metallo-dependent hydrolases superfamily. Adenosine and AMP deaminases family. Adenosine deaminase subfamily. Zn(2+) is required as a cofactor.

It carries out the reaction adenosine + H2O + H(+) = inosine + NH4(+). The catalysed reaction is 2'-deoxyadenosine + H2O + H(+) = 2'-deoxyinosine + NH4(+). In terms of biological role, catalyzes the hydrolytic deamination of adenosine and 2-deoxyadenosine. In Shewanella sp. (strain MR-7), this protein is Adenosine deaminase.